A 229-amino-acid polypeptide reads, in one-letter code: MNRKMLQVYFICGTSDCPKGKFLDVLEKALQAGITCFQFREKGEQGLTGADKLLLAKQVQHLCHRYQVPLIINDDVELARAIDADGIHLGQEDLSVVEARQLFPGKIIGLSVGTKEEYLNSPIDLVDYIGSGPVFPTLSKDDASPAIGMDGLKQLRKLNSDIPMVAIGGLSAKDCKEVLQAGADGIAVISAISHAEDPYKATKILVDGMQAMILKFNQVESNKQILKNP.

4-amino-2-methyl-5-(diphosphooxymethyl)pyrimidine is bound by residues 38–42 (QFREK) and Asn73. Mg(2+) is bound by residues Asp74 and Asp93. 4-amino-2-methyl-5-(diphosphooxymethyl)pyrimidine is bound at residue Ser111. 137-139 (TLS) serves as a coordination point for 2-[(2R,5Z)-2-carboxy-4-methylthiazol-5(2H)-ylidene]ethyl phosphate. Position 140 (Lys140) interacts with 4-amino-2-methyl-5-(diphosphooxymethyl)pyrimidine. Residues Gly169 and 189–190 (IS) contribute to the 2-[(2R,5Z)-2-carboxy-4-methylthiazol-5(2H)-ylidene]ethyl phosphate site.

Belongs to the thiamine-phosphate synthase family. Mg(2+) is required as a cofactor.

The enzyme catalyses 2-[(2R,5Z)-2-carboxy-4-methylthiazol-5(2H)-ylidene]ethyl phosphate + 4-amino-2-methyl-5-(diphosphooxymethyl)pyrimidine + 2 H(+) = thiamine phosphate + CO2 + diphosphate. The catalysed reaction is 2-(2-carboxy-4-methylthiazol-5-yl)ethyl phosphate + 4-amino-2-methyl-5-(diphosphooxymethyl)pyrimidine + 2 H(+) = thiamine phosphate + CO2 + diphosphate. It carries out the reaction 4-methyl-5-(2-phosphooxyethyl)-thiazole + 4-amino-2-methyl-5-(diphosphooxymethyl)pyrimidine + H(+) = thiamine phosphate + diphosphate. It functions in the pathway cofactor biosynthesis; thiamine diphosphate biosynthesis; thiamine phosphate from 4-amino-2-methyl-5-diphosphomethylpyrimidine and 4-methyl-5-(2-phosphoethyl)-thiazole: step 1/1. In terms of biological role, condenses 4-methyl-5-(beta-hydroxyethyl)thiazole monophosphate (THZ-P) and 2-methyl-4-amino-5-hydroxymethyl pyrimidine pyrophosphate (HMP-PP) to form thiamine monophosphate (TMP). This chain is Thiamine-phosphate synthase, found in Streptococcus suis (strain 98HAH33).